A 182-amino-acid polypeptide reads, in one-letter code: UPF0316 protein BCQ_3166 (182 aa).

3 helical membrane passes run 6-26, 32-52, and 58-78; these read LIFV…ILLV, SAAA…GIVF, and WMNI…GGYI.

Belongs to the UPF0316 family.

The protein localises to the cell membrane. This Bacillus cereus (strain Q1) protein is UPF0316 protein BCQ_3166.